The following is a 559-amino-acid chain: Serine/threonine-protein kinase VRK1 (559 aa).

The 357-residue stretch at 32–388 (YIVGKQFATG…EDDDEEEEVI (357 aa)) folds into the Protein kinase domain. ATP contacts are provided by residues 38 to 46 (FATGGFGRI) and Lys-61. The active-site Proton acceptor is Asp-167. 2 disordered regions span residues 315-419 (EAAQ…ATSD) and 448-559 (SSCE…SSEV). Composition is skewed to polar residues over residues 405–418 (RSFN…TATS) and 449–460 (SCESQYESNEPG). Positions 533-542 (TSARYQEKRA) are enriched in basic and acidic residues. A compositionally biased stretch (polar residues) spans 545–559 (NTKPTFDDSSCSSEV).

Belongs to the protein kinase superfamily. CK1 Ser/Thr protein kinase family. VRK subfamily. In terms of processing, autophosphorylates in vitro.

It is found in the nucleus. The protein localises to the cytoplasm. Its subcellular location is the cajal body. The enzyme catalyses L-seryl-[protein] + ATP = O-phospho-L-seryl-[protein] + ADP + H(+). It carries out the reaction L-threonyl-[protein] + ATP = O-phospho-L-threonyl-[protein] + ADP + H(+). Serine/threonine kinase that phosphorylates baf-1, thus regulating the association of baf-1 with chromatin and nuclear membrane proteins during nuclear envelope formation. May act through the egl-17 signaling pathway. Essential in hermaphrodites for formation of the vulva, uterus, and uterine seam cells and for development and maintenance of the somatic gonad and thus the germ line. Acts to prevent cep-1 from triggering an inappropriate cell cycle arrest, thereby promoting germ cell proliferation. Regulates anchor cell polarity and the timing of anchor cell invasion through the basement membranes separating vulval and somatic gonadal cells during the L3 larval stage. The sequence is that of Serine/threonine-protein kinase VRK1 from Caenorhabditis briggsae.